Reading from the N-terminus, the 198-residue chain is Nucleoside triphosphate pyrophosphatase (198 aa).

Asp72 serves as the catalytic Proton acceptor.

The protein belongs to the Maf family. A divalent metal cation serves as cofactor.

It localises to the cytoplasm. The catalysed reaction is a ribonucleoside 5'-triphosphate + H2O = a ribonucleoside 5'-phosphate + diphosphate + H(+). The enzyme catalyses a 2'-deoxyribonucleoside 5'-triphosphate + H2O = a 2'-deoxyribonucleoside 5'-phosphate + diphosphate + H(+). Nucleoside triphosphate pyrophosphatase. May have a dual role in cell division arrest and in preventing the incorporation of modified nucleotides into cellular nucleic acids. The protein is Nucleoside triphosphate pyrophosphatase of Corynebacterium aurimucosum (strain ATCC 700975 / DSM 44827 / CIP 107346 / CN-1) (Corynebacterium nigricans).